We begin with the raw amino-acid sequence, 197 residues long: ATP-dependent Clp protease proteolytic subunit (197 aa).

S98 functions as the Nucleophile in the catalytic mechanism. H123 is an active-site residue.

It belongs to the peptidase S14 family. In terms of assembly, fourteen ClpP subunits assemble into 2 heptameric rings which stack back to back to give a disk-like structure with a central cavity, resembling the structure of eukaryotic proteasomes. Forms large heterooligomeric complexes consisting of an ATPase component (ClpX, ClpC or ClpE) and a proteolytic component (ClpP).

Its subcellular location is the cytoplasm. The enzyme catalyses Hydrolysis of proteins to small peptides in the presence of ATP and magnesium. alpha-casein is the usual test substrate. In the absence of ATP, only oligopeptides shorter than five residues are hydrolyzed (such as succinyl-Leu-Tyr-|-NHMec, and Leu-Tyr-Leu-|-Tyr-Trp, in which cleavage of the -Tyr-|-Leu- and -Tyr-|-Trp bonds also occurs).. Low intrinsic peptidase activity is stimulated by ATP-binding subunits ClpC, ClpE and ClpX. Activity is disregulated by acyldepsipeptides (ADEP) antibiotics, which negate the need for ATP-binding subunits for activation and which makes it into an unregulated protease. Each ClpP subunit binds 1 ADEP molecule, which prevents binding of ClpX. ADEP binding causes conformational shifts that open the gated pore of the ring. Protease activity is inhibited by diisopropylfluoro-phosphate. Protease activity is inhibited by bortezomib, an oncology drug originally designed to work on the human proteasome. Its function is as follows. Cleaves peptides in various proteins in a process that requires ATP hydrolysis. Has a limited peptidase activity in the absence of ATP-binding subunits ClpC, ClpE or ClpX. Has a chymotrypsin-like activity. Plays a major role in the degradation of misfolded proteins. ClpXP is involved in the complete degradation of the site-2 clipped anti-sigma-W factor RsiW. This results in the release of SigW and the transcriptional activation of genes under the control of the sigma-W factor. Probably the major protease that degrades proteins tagged by trans-translation. This chain is ATP-dependent Clp protease proteolytic subunit, found in Bacillus subtilis (strain 168).